We begin with the raw amino-acid sequence, 255 residues long: Trypsin alpha-4 (255 aa).

Positions 1–16 (MLKFVVLLCAISCALG) are cleaved as a signal peptide. The propeptide at 17 to 30 (AAVPEGMVPQLDGR) is activation peptide. Positions 31-253 (IVGGVATTIS…LRTWVVSAAS (223 aa)) constitute a Peptidase S1 domain. Residues cysteine 56 and cysteine 72 are joined by a disulfide bond. Residues histidine 71 and aspartate 116 each act as charge relay system in the active site. 2 disulfides stabilise this stretch: cysteine 179–cysteine 196 and cysteine 205–cysteine 229. Serine 209 (charge relay system) is an active-site residue.

This sequence belongs to the peptidase S1 family.

The protein localises to the secreted. The protein resides in the extracellular space. The enzyme catalyses Preferential cleavage: Arg-|-Xaa, Lys-|-Xaa.. The chain is Trypsin alpha-4 from Lucilia cuprina (Green bottle fly).